The chain runs to 38 residues: MSVKTYPIFTFRWLAVHALAVPTVFFLGSITAMQFIQR.

The helical transmembrane segment at 13–29 (WLAVHALAVPTVFFLGS) threads the bilayer. His-17 provides a ligand contact to heme.

It belongs to the PsbE/PsbF family. In terms of assembly, heterodimer of an alpha subunit and a beta subunit. PSII is composed of 1 copy each of membrane proteins PsbA, PsbB, PsbC, PsbD, PsbE, PsbF, PsbH, PsbI, PsbJ, PsbK, PsbL, PsbM, PsbT, PsbX, PsbY, PsbZ, Psb30/Ycf12, at least 3 peripheral proteins of the oxygen-evolving complex and a large number of cofactors. It forms dimeric complexes. Heme b is required as a cofactor.

It is found in the plastid. It localises to the chloroplast thylakoid membrane. In terms of biological role, this b-type cytochrome is tightly associated with the reaction center of photosystem II (PSII). PSII is a light-driven water:plastoquinone oxidoreductase that uses light energy to abstract electrons from H(2)O, generating O(2) and a proton gradient subsequently used for ATP formation. It consists of a core antenna complex that captures photons, and an electron transfer chain that converts photonic excitation into a charge separation. The protein is Cytochrome b559 subunit beta of Ostreococcus tauri.